A 486-amino-acid chain; its full sequence is Intermediate cleaving peptidase 55 (486 aa).

The N-terminal 19 residues, 1 to 19 (MSGYIRTLFIRNRFSNYRL), are a transit peptide targeting the mitochondrion. Mn(2+)-binding residues include Asp317, Asp328, His407, Glu434, and Glu457.

It belongs to the peptidase M24B family. It depends on Mn(2+) as a cofactor.

Its subcellular location is the mitochondrion inner membrane. The enzyme catalyses The enzyme cleaves the 36-Pro-Pro-37 bond of cysteine desulfurase (EC 2.8.1.7) removing three amino acid residues (Tyr-Ser-Pro) from the N-terminus after cleavage by mitochondrial processing peptidase.. Its function is as follows. Aminopeptidase which cleaves preprotein intermediates that carry destabilizing N-ter amino acid residues after the mitochondrial processing peptidase (MPP) cleavage site and is thus critical for stabilization of the mitochondrial proteome. This is Intermediate cleaving peptidase 55 (icp55) from Schizosaccharomyces pombe (strain 972 / ATCC 24843) (Fission yeast).